The sequence spans 387 residues: Proteinase R (387 aa).

An N-terminal signal peptide occupies residues 1-21 (MRLSILLGLLPLAPRPPAVDA). A propeptide spanning residues 22–108 (VEQRSEPAPL…IEQDAIVNIN (87 aa)) is cleaved from the precursor. The region spanning 42 to 107 (KYIVKLKEGS…YIEQDAIVNI (66 aa)) is the Inhibitor I9 domain. The Peptidase S8 domain maps to 115 to 387 (PWGLARISST…NLLAYNNYQG (273 aa)). Thr124 contributes to the Ca(2+) binding site. 2 disulfides stabilise this stretch: Cys142-Cys231 and Cys286-Cys357. Active-site charge relay system residues include Asp147 and His177. Asp308 is a Ca(2+) binding site. Ser332 functions as the Charge relay system in the catalytic mechanism. Ca(2+) is bound at residue Asp368.

This sequence belongs to the peptidase S8 family. Ca(2+) serves as cofactor.

Its function is as follows. Serine proteinase. The protein is Proteinase R (PROR) of Parengyodontium album (Tritirachium album).